Reading from the N-terminus, the 274-residue chain is Cytochrome b-c1 complex subunit Rieske, mitochondrial (274 aa).

Topologically, residues 79–103 are mitochondrial matrix; sequence SHTDIKVPDFSDYRRPEVLDSTKSS. A helical transmembrane segment spans residues 104-140; it reads KESSEARKGFSYLVTATTTVGVAYAAKNVVSQFVSSM. The Mitochondrial intermembrane portion of the chain corresponds to 141-274; that stretch reads SASADVLAMS…FTSDDMVIVG (134 aa). The region spanning 187–272 is the Rieske domain; that stretch reads EAAVEVSQLR…YEFTSDDMVI (86 aa). 5 residues coordinate [2Fe-2S] cluster: C217, H219, C236, H239, and S241. A disulfide bond links C222 and C238.

Belongs to the Rieske iron-sulfur protein family. Component of the ubiquinol-cytochrome c oxidoreductase (cytochrome b-c1 complex, complex III, CIII), a multisubunit enzyme composed of 11 subunits. The complex is composed of 3 respiratory subunits cytochrome b, cytochrome c1 and Rieske protein UQCRFS1, 2 core protein subunits UQCRC1/QCR1 and UQCRC2/QCR2, and 6 low-molecular weight protein subunits UQCRH/QCR6, UQCRB/QCR7, UQCRQ/QCR8, UQCR10/QCR9, UQCR11/QCR10 and subunit 9, the cleavage product of Rieske protein UQCRFS1. The complex exists as an obligatory dimer and forms supercomplexes (SCs) in the inner mitochondrial membrane with NADH-ubiquinone oxidoreductase (complex I, CI) and cytochrome c oxidase (complex IV, CIV), resulting in different assemblies (supercomplex SCI(1)III(2)IV(1) and megacomplex MCI(2)III(2)IV(2)). Incorporation of the Rieske protein UQCRFS1 is the penultimate step in complex III assembly. Interacts with TTC19, which is involved in the clearance of UQCRFS1 fragments. In terms of assembly, component of the ubiquinol-cytochrome c oxidoreductase (cytochrome b-c1 complex, complex III, CIII). Subunit 9 corresponds to the mitochondrial targeting sequence (MTS) of Rieske protein UQCRFS1. It is retained after processing and incorporated inside complex III, where it remains bound to the complex and localizes between the 2 core subunits UQCRC1/QCR1 and UQCRC2/QCR2. [2Fe-2S] cluster is required as a cofactor. Post-translationally, proteolytic processing is necessary for the correct insertion of UQCRFS1 in the complex III dimer. Several fragments are generated during UQCRFS1 insertion, most probably due to the endogenous matrix-processing peptidase (MPP) activity of the 2 core protein subunits UQCRC1/QCR1 and UQCRC2/QCR2, which are homologous to the 2 mitochondrial-processing peptidase (MPP) subunits beta-MPP and alpha-MPP respectively. The action of the protease is also necessary for the clearance of the UQCRFS1 fragments.

It is found in the mitochondrion inner membrane. It catalyses the reaction a quinol + 2 Fe(III)-[cytochrome c](out) = a quinone + 2 Fe(II)-[cytochrome c](out) + 2 H(+)(out). Component of the ubiquinol-cytochrome c oxidoreductase, a multisubunit transmembrane complex that is part of the mitochondrial electron transport chain which drives oxidative phosphorylation. The respiratory chain contains 3 multisubunit complexes succinate dehydrogenase (complex II, CII), ubiquinol-cytochrome c oxidoreductase (cytochrome b-c1 complex, complex III, CIII) and cytochrome c oxidase (complex IV, CIV), that cooperate to transfer electrons derived from NADH and succinate to molecular oxygen, creating an electrochemical gradient over the inner membrane that drives transmembrane transport and the ATP synthase. The cytochrome b-c1 complex catalyzes electron transfer from ubiquinol to cytochrome c, linking this redox reaction to translocation of protons across the mitochondrial inner membrane, with protons being carried across the membrane as hydrogens on the quinol. In the process called Q cycle, 2 protons are consumed from the matrix, 4 protons are released into the intermembrane space and 2 electrons are passed to cytochrome c. The Rieske protein is a catalytic core subunit containing a [2Fe-2S] iron-sulfur cluster. It cycles between 2 conformational states during catalysis to transfer electrons from the quinol bound in the Q(0) site in cytochrome b to cytochrome c1. Incorporation of UQCRFS1 is the penultimate step in complex III assembly. In terms of biological role, component of the ubiquinol-cytochrome c oxidoreductase (cytochrome b-c1 complex, complex III, CIII). UQCRFS1 undergoes proteolytic processing once it is incorporated in the complex III dimer. One of the fragments, called subunit 9, corresponds to its mitochondrial targeting sequence (MTS). The proteolytic processing is necessary for the correct insertion of UQCRFS1 in the complex III dimer, but the persistence of UQCRFS1-derived fragments may prevent newly imported UQCRFS1 to be processed and assembled into complex III and is detrimental for the complex III structure and function. The polypeptide is Cytochrome b-c1 complex subunit Rieske, mitochondrial (UQCRFS1) (Bos taurus (Bovine)).